Here is a 512-residue protein sequence, read N- to C-terminus: 2-isopropylmalate synthase (512 aa).

Residues 4–266 (IQFFDTTLRD…ETNIVLNQFK (263 aa)) form the Pyruvate carboxyltransferase domain. 4 residues coordinate Mn(2+): D13, H201, H203, and N237. Positions 390–512 (ELKHLQVQYV…TKQVDFEEVK (123 aa)) are regulatory domain.

Belongs to the alpha-IPM synthase/homocitrate synthase family. LeuA type 1 subfamily. As to quaternary structure, homodimer. It depends on Mn(2+) as a cofactor.

The protein localises to the cytoplasm. It carries out the reaction 3-methyl-2-oxobutanoate + acetyl-CoA + H2O = (2S)-2-isopropylmalate + CoA + H(+). The protein operates within amino-acid biosynthesis; L-leucine biosynthesis; L-leucine from 3-methyl-2-oxobutanoate: step 1/4. Functionally, catalyzes the condensation of the acetyl group of acetyl-CoA with 3-methyl-2-oxobutanoate (2-ketoisovalerate) to form 3-carboxy-3-hydroxy-4-methylpentanoate (2-isopropylmalate). The protein is 2-isopropylmalate synthase of Listeria welshimeri serovar 6b (strain ATCC 35897 / DSM 20650 / CCUG 15529 / CIP 8149 / NCTC 11857 / SLCC 5334 / V8).